Consider the following 287-residue polypeptide: ATP synthase gamma chain (287 aa).

This sequence belongs to the ATPase gamma chain family. As to quaternary structure, F-type ATPases have 2 components, CF(1) - the catalytic core - and CF(0) - the membrane proton channel. CF(1) has five subunits: alpha(3), beta(3), gamma(1), delta(1), epsilon(1). CF(0) has three main subunits: a, b and c.

Its subcellular location is the cell inner membrane. In terms of biological role, produces ATP from ADP in the presence of a proton gradient across the membrane. The gamma chain is believed to be important in regulating ATPase activity and the flow of protons through the CF(0) complex. The chain is ATP synthase gamma chain from Methylococcus capsulatus (strain ATCC 33009 / NCIMB 11132 / Bath).